Reading from the N-terminus, the 691-residue chain is Elongation factor G (691 aa).

A tr-type G domain is found at 8–283; the sequence is KKVRNIGIAA…AVVAYLPAPD (276 aa). GTP contacts are provided by residues 17–24, 81–85, and 135–138; these read AHIDAGKT, DTPGH, and NKMD.

Belongs to the TRAFAC class translation factor GTPase superfamily. Classic translation factor GTPase family. EF-G/EF-2 subfamily.

It is found in the cytoplasm. Its function is as follows. Catalyzes the GTP-dependent ribosomal translocation step during translation elongation. During this step, the ribosome changes from the pre-translocational (PRE) to the post-translocational (POST) state as the newly formed A-site-bound peptidyl-tRNA and P-site-bound deacylated tRNA move to the P and E sites, respectively. Catalyzes the coordinated movement of the two tRNA molecules, the mRNA and conformational changes in the ribosome. The protein is Elongation factor G of Campylobacter jejuni subsp. jejuni serotype O:23/36 (strain 81-176).